Reading from the N-terminus, the 280-residue chain is Phosphatidylglycerol--prolipoprotein diacylglyceryl transferase (280 aa).

4 consecutive transmembrane segments (helical) span residues 30–50 (WYGL…RRII), 71–91 (FLLW…ILFY), 106–126 (IWNG…AIII), and 132–152 (AIPL…GLFF). Position 154 (Arg154) interacts with a 1,2-diacyl-sn-glycero-3-phospho-(1'-sn-glycerol). 3 helical membrane passes run 188–208 (QLYE…WFVY), 217–237 (GLVT…VEFF), and 251–271 (WLTM…WAIA).

Belongs to the Lgt family.

Its subcellular location is the cell inner membrane. The catalysed reaction is L-cysteinyl-[prolipoprotein] + a 1,2-diacyl-sn-glycero-3-phospho-(1'-sn-glycerol) = an S-1,2-diacyl-sn-glyceryl-L-cysteinyl-[prolipoprotein] + sn-glycerol 1-phosphate + H(+). The protein operates within protein modification; lipoprotein biosynthesis (diacylglyceryl transfer). Its function is as follows. Catalyzes the transfer of the diacylglyceryl group from phosphatidylglycerol to the sulfhydryl group of the N-terminal cysteine of a prolipoprotein, the first step in the formation of mature lipoproteins. In Rhizobium meliloti (strain 1021) (Ensifer meliloti), this protein is Phosphatidylglycerol--prolipoprotein diacylglyceryl transferase.